Consider the following 260-residue polypeptide: Flap endonuclease Xni (260 aa).

Residue Asp109 coordinates Mg(2+). The 5'-3' exonuclease domain occupies 165-259 (VKPSQLADYW…DIRFTGPNKA (95 aa)). The K(+) site is built by Leu176, Pro185, Val187, and Ile190. An interaction with DNA region spans residues 189–194 (GIGPKA).

Belongs to the Xni family. Mg(2+) is required as a cofactor. K(+) serves as cofactor.

In terms of biological role, has flap endonuclease activity. During DNA replication, flap endonucleases cleave the 5'-overhanging flap structure that is generated by displacement synthesis when DNA polymerase encounters the 5'-end of a downstream Okazaki fragment. The polypeptide is Flap endonuclease Xni (Vibrio parahaemolyticus serotype O3:K6 (strain RIMD 2210633)).